A 187-amino-acid chain; its full sequence is UPF0398 protein SAB1311c (187 aa).

This sequence belongs to the UPF0398 family.

This Staphylococcus aureus (strain bovine RF122 / ET3-1) protein is UPF0398 protein SAB1311c.